Consider the following 422-residue polypeptide: Keratin, type I cytoskeletal 23 (422 aa).

Positions 1-24 are enriched in polar residues; the sequence is MNSSHSFNQTYSASVHSLGSTRGR. Residues 1–35 form a disordered region; sequence MNSSHSFNQTYSASVHSLGSTRGRQGSCHRAPSVH. Residues 1 to 71 are head; the sequence is MNSSHSFNQT…GRSSPLLGGN (71 aa). A coil 1A region spans residues 72-107; it reads GKATMQNLNDRLATYLEKVRALEEANSKLETRILRW. Residues 72 to 382 enclose the IF rod domain; sequence GKATMQNLND…RLLEGDTEGT (311 aa). A linker 1 region spans residues 108-125; it reads HQEREPSHRKDYSQYEEN. Positions 126 to 217 are coil 1B; that stretch reads ISRLQEQIVD…KRHEQEMEEN (92 aa). A linker 12 region spans residues 218–240; it reads HLPSDFKVSVKVDTTPGEDLIKV. The tract at residues 241–378 is coil 2; it reads LEDMRQEYEL…ATYRRLLEGD (138 aa). A rod-like helical tail region spans residues 379–422; that stretch reads TEGTMDGSESRLKGSEASTIKAITQESVNGRIVLSQVNEIQKHI.

It belongs to the intermediate filament family. As to quaternary structure, heterotetramer of two type I and two type II keratins.

The polypeptide is Keratin, type I cytoskeletal 23 (Krt23) (Mus musculus (Mouse)).